The following is a 215-amino-acid chain: Glycerol-3-phosphate acyltransferase (215 aa).

5 consecutive transmembrane segments (helical) span residues 14–34, 63–83, 92–112, 128–148, and 154–174; these read SSSALIVLAYLIGSIPFAVVV, TAAALTLLGDAAKGWFALWLA, WGAYALVALAVFLGHLYPLFL, MAIEPWLAVATIATWLIVAVF, and LAALVAAFFAPVYYVFGSGAA.

The protein belongs to the PlsY family. As to quaternary structure, probably interacts with PlsX.

It localises to the cell inner membrane. The enzyme catalyses an acyl phosphate + sn-glycerol 3-phosphate = a 1-acyl-sn-glycero-3-phosphate + phosphate. The protein operates within lipid metabolism; phospholipid metabolism. Its function is as follows. Catalyzes the transfer of an acyl group from acyl-phosphate (acyl-PO(4)) to glycerol-3-phosphate (G3P) to form lysophosphatidic acid (LPA). This enzyme utilizes acyl-phosphate as fatty acyl donor, but not acyl-CoA or acyl-ACP. In Bordetella bronchiseptica (strain ATCC BAA-588 / NCTC 13252 / RB50) (Alcaligenes bronchisepticus), this protein is Glycerol-3-phosphate acyltransferase.